We begin with the raw amino-acid sequence, 59 residues long: Large ribosomal subunit protein uL30 (59 aa).

It belongs to the universal ribosomal protein uL30 family. Part of the 50S ribosomal subunit.

This chain is Large ribosomal subunit protein uL30, found in Mycolicibacterium vanbaalenii (strain DSM 7251 / JCM 13017 / BCRC 16820 / KCTC 9966 / NRRL B-24157 / PYR-1) (Mycobacterium vanbaalenii).